A 303-amino-acid chain; its full sequence is UDP-3-O-acyl-N-acetylglucosamine deacetylase (303 aa).

3 residues coordinate Zn(2+): histidine 78, histidine 237, and aspartate 241. The Proton donor role is filled by histidine 264.

Belongs to the LpxC family. Zn(2+) is required as a cofactor.

The enzyme catalyses a UDP-3-O-[(3R)-3-hydroxyacyl]-N-acetyl-alpha-D-glucosamine + H2O = a UDP-3-O-[(3R)-3-hydroxyacyl]-alpha-D-glucosamine + acetate. It functions in the pathway glycolipid biosynthesis; lipid IV(A) biosynthesis; lipid IV(A) from (3R)-3-hydroxytetradecanoyl-[acyl-carrier-protein] and UDP-N-acetyl-alpha-D-glucosamine: step 2/6. Catalyzes the hydrolysis of UDP-3-O-myristoyl-N-acetylglucosamine to form UDP-3-O-myristoylglucosamine and acetate, the committed step in lipid A biosynthesis. The polypeptide is UDP-3-O-acyl-N-acetylglucosamine deacetylase (Pseudomonas fluorescens (strain Pf0-1)).